Reading from the N-terminus, the 181-residue chain is MAGNDSNLIWLDLEMTGLEPVEDVILEIAIIITDSELNILAQGPIFAISQTDDVLDNMNPWCIEHHGKSGLTQRCRDSEVSLAHATKESLAFVQEWVPQGKSPMCGNSIGQDRRFINKYMPDFEDHFHYRNLDVSTIKELAKRWKPEVLESVVKTGAHLALDDIKESIAELKVYRELFFKL.

The Exonuclease domain occupies 8 to 171; the sequence is LIWLDLEMTG…DDIKESIAEL (164 aa). The active site involves tyrosine 129.

The protein belongs to the oligoribonuclease family.

It localises to the cytoplasm. Its function is as follows. 3'-to-5' exoribonuclease specific for small oligoribonucleotides. The chain is Oligoribonuclease from Colwellia psychrerythraea (strain 34H / ATCC BAA-681) (Vibrio psychroerythus).